Here is a 232-residue protein sequence, read N- to C-terminus: tRNA pseudouridine synthase B (232 aa).

Asp-53 serves as the catalytic Nucleophile.

This sequence belongs to the pseudouridine synthase TruB family. Type 1 subfamily.

The enzyme catalyses uridine(55) in tRNA = pseudouridine(55) in tRNA. In terms of biological role, responsible for synthesis of pseudouridine from uracil-55 in the psi GC loop of transfer RNAs. This is tRNA pseudouridine synthase B from Malacoplasma penetrans (strain HF-2) (Mycoplasma penetrans).